The following is a 1053-amino-acid chain: Serine/threonine-protein phosphatase 6 regulatory ankyrin repeat subunit A (1053 aa).

ANK repeat units follow at residues 40-69 (EKRTPLHAAAYLGDAEIIELLILSGARVNA), 73-102 (KWLTPLHRAVASCSEEAVQVLLKHSADVNA), 106-135 (NWQTPLHIAAANKAVKCAEALVPLLSNVNV), 139-168 (AGRTALHHAAFSGHGEMVKLLLSRGANINA), 172-201 (KDRRAIHWAAYMGHIEVVKLLVSHGAEVTC), 205-234 (KSYTPLHAAASSGMISVVKYLLDLGVDMNE), 238-267 (YGNTPLHVACYNGQDVVVNELIDCGAIVNQ), 271-301 (KGFTPLHFAAASTHGALCLELLVGNGADVNM), 305-334 (DGKTPLHMTALHGRFSRSQTIIQSGAVIDC), 338-367 (NGNTPLHIAARYGHELLINTLITSGADTAK), 371-400 (HGMFPLHLAALSGFSDCCRKLLSSGFDIDT), 404-433 (FGRTCLHAAAAGGNLECLNLLLNTGADFNK), 437-466 (FGRSPLHYAAANCNYQCLFALVGSGASVND), 470-500 (RGCTPLHYAATSDTDGKCLEYLLRNDANPGI), 504-534 (QGYNAVHYSAAYGHRLCLQLIASETPLDVLM), 549-578 (ATISPLHLAAYHGHHQALEVLVQSLLDLDV), 582-611 (SGRTPLDLAAFKGHVECVDVLINQGASILV), 616-645 (LKRTPIHAAATNGHSECLRLLIGNAEPQNA), 652-681 (NGQTPLMLSVLNGHTDCVYSLLNKGANVDA), 685-714 (WGRTALHRGAVTGHEECVDALLQHGAKCLL), 718-747 (RGRTPIHLSAACGHIGVLGALLQSAASMDA), 755-784 (HGYTALHWACYNGHETCVELLLEQEVFQKT), 787-817 (NAFSPLHCAVINDNEGAAEMLIDTLGASIVN), 822-851 (KGRTPLHAAAFTDHVECLQLLLSHNAQVNS), 855-885 (TGKTPLMMAAENGQTNTVEMLVSSASAELTL), 889-918 (SKNTALHLACSKGHETSALLILEKITDRNL), and 925-954 (ALQTPLHVAARNGLTMVVQELLGKGASVLA). Ser1007 and Ser1011 each carry phosphoserine.

In terms of assembly, protein phosphatase 6 (PP6) holoenzyme is proposed to be a heterotrimeric complex formed by the catalytic subunit, a SAPS domain-containing subunit (PP6R) and an ankyrin repeat-domain containing regulatory subunit (ARS). Interacts with PPP6C, PPP6R1 and PPP6R3. Interacts with PPP1C and HNRPK. Ubiquitinated by the ECS(RAB40C) complex leading to its degradation and decreased PP6 activity.

Its subcellular location is the nucleus. The protein resides in the nucleoplasm. It localises to the cytoplasm. It is found in the cytosol. The protein localises to the cell projection. Its subcellular location is the lamellipodium. Functionally, regulatory subunit of protein phosphatase 6 (PP6) that may be involved in the recognition of phosphoprotein substrates. Involved in the PP6-mediated dephosphorylation of NFKBIE opposing its degradation in response to TNF-alpha. Selectively inhibits the phosphatase activity of PPP1C. Targets PPP1C to modulate HNRPK phosphorylation. Involved in the PP6-mediated dephosphorylation of MOB1 and induced focal adhesion assembly during cell migration. The polypeptide is Serine/threonine-protein phosphatase 6 regulatory ankyrin repeat subunit A (Homo sapiens (Human)).